The primary structure comprises 472 residues: 3-isopropylmalate dehydratase large subunit (472 aa).

[4Fe-4S] cluster-binding residues include C353, C414, and C417.

It belongs to the aconitase/IPM isomerase family. LeuC type 1 subfamily. Heterodimer of LeuC and LeuD. It depends on [4Fe-4S] cluster as a cofactor.

The enzyme catalyses (2R,3S)-3-isopropylmalate = (2S)-2-isopropylmalate. It participates in amino-acid biosynthesis; L-leucine biosynthesis; L-leucine from 3-methyl-2-oxobutanoate: step 2/4. Functionally, catalyzes the isomerization between 2-isopropylmalate and 3-isopropylmalate, via the formation of 2-isopropylmaleate. The protein is 3-isopropylmalate dehydratase large subunit of Acinetobacter baumannii (strain ACICU).